We begin with the raw amino-acid sequence, 612 residues long: Pentatricopeptide repeat-containing protein At4g14050, mitochondrial (612 aa).

The transit peptide at 1-24 (MLIPHYLHQLQLCARNRTLTTAKA) directs the protein to the mitochondrion. PPR repeat units follow at residues 37-71 (CCPL…DHIA), 72-103 (WASV…GLRP), 104-138 (DDFV…EYAN), 139-169 (DEVV…IRVK), 170-204 (NTIS…NLYS), 205-235 (WTAL…RVDI), 237-271 (DPLV…GFDS), 272-302 (CVFI…MRHR), 303-337 (DVVS…GVKP), 338-373 (NEVT…GIRP), and 374-408 (SLQH…PDEP). Residues 409–485 (TWAALLSACK…DPGHSSVEVR (77 aa)) are type E motif. The interval 486–516 (KETEVFYAGETSHPLKEDIFRLLKKLEEEMR) is type E(+) motif. Residues 518 to 612 (RNGYVPDTSW…GGKCSCNDFW (95 aa)) are type DYW motif.

Belongs to the PPR family. PCMP-H subfamily. Interacts with MORF8/RIP1 and MORF1/RIP8.

It localises to the mitochondrion. Its function is as follows. Involved in C-to-U editing of mitochondrial RNA. Required specifically for editing the mitochondrial NAD4, MT-CYB/COB and RPL16 transcripts. This is Pentatricopeptide repeat-containing protein At4g14050, mitochondrial (PCMP-H13) from Arabidopsis thaliana (Mouse-ear cress).